The primary structure comprises 81 residues: ATP synthase subunit c (81 aa).

2 helical membrane passes run 7–27 (AASV…PGIG) and 57–77 (LAFM…LLFA).

It belongs to the ATPase C chain family. As to quaternary structure, F-type ATPases have 2 components, F(1) - the catalytic core - and F(0) - the membrane proton channel. F(1) has five subunits: alpha(3), beta(3), gamma(1), delta(1), epsilon(1). F(0) has four main subunits: a(1), b(1), b'(1) and c(10-14). The alpha and beta chains form an alternating ring which encloses part of the gamma chain. F(1) is attached to F(0) by a central stalk formed by the gamma and epsilon chains, while a peripheral stalk is formed by the delta, b and b' chains.

Its subcellular location is the cellular thylakoid membrane. Its function is as follows. F(1)F(0) ATP synthase produces ATP from ADP in the presence of a proton or sodium gradient. F-type ATPases consist of two structural domains, F(1) containing the extramembraneous catalytic core and F(0) containing the membrane proton channel, linked together by a central stalk and a peripheral stalk. During catalysis, ATP synthesis in the catalytic domain of F(1) is coupled via a rotary mechanism of the central stalk subunits to proton translocation. Functionally, key component of the F(0) channel; it plays a direct role in translocation across the membrane. A homomeric c-ring of between 10-14 subunits forms the central stalk rotor element with the F(1) delta and epsilon subunits. This is ATP synthase subunit c from Synechococcus sp. (strain CC9311).